Here is a 633-residue protein sequence, read N- to C-terminus: 1-deoxy-D-xylulose-5-phosphate synthase (633 aa).

Thiamine diphosphate contacts are provided by residues His74 and 115-117 (GHA). Asp146 is a binding site for Mg(2+). Residues 147 to 148 (GA), Asn175, Tyr286, and Glu363 contribute to the thiamine diphosphate site. Asn175 serves as a coordination point for Mg(2+).

Belongs to the transketolase family. DXPS subfamily. In terms of assembly, homodimer. Mg(2+) serves as cofactor. The cofactor is thiamine diphosphate.

It catalyses the reaction D-glyceraldehyde 3-phosphate + pyruvate + H(+) = 1-deoxy-D-xylulose 5-phosphate + CO2. Its pathway is metabolic intermediate biosynthesis; 1-deoxy-D-xylulose 5-phosphate biosynthesis; 1-deoxy-D-xylulose 5-phosphate from D-glyceraldehyde 3-phosphate and pyruvate: step 1/1. Its function is as follows. Catalyzes the acyloin condensation reaction between C atoms 2 and 3 of pyruvate and glyceraldehyde 3-phosphate to yield 1-deoxy-D-xylulose-5-phosphate (DXP). This is 1-deoxy-D-xylulose-5-phosphate synthase from Dehalococcoides mccartyi (strain ATCC BAA-2100 / JCM 16839 / KCTC 5957 / BAV1).